Reading from the N-terminus, the 162-residue chain is Single-stranded DNA-binding protein 1 (162 aa).

Positions 5 to 110 (LNKVMLIGHL…IVCTDMQMLG (106 aa)) constitute an SSB domain. Residues 110-162 (GAKDSGGGTSDASYSQNRPSYSRPSRPEPSSGNYGASPSSGGAQEFEKDDLPF) are disordered. Low complexity predominate over residues 122 to 140 (SYSQNRPSYSRPSRPEPSS). Polar residues predominate over residues 141-151 (GNYGASPSSGG).

As to quaternary structure, homotetramer.

The protein is Single-stranded DNA-binding protein 1 (ssb1) of Chlorobaculum tepidum (strain ATCC 49652 / DSM 12025 / NBRC 103806 / TLS) (Chlorobium tepidum).